Reading from the N-terminus, the 399-residue chain is 1-deoxy-D-xylulose 5-phosphate reductoisomerase (399 aa).

The NADPH site is built by threonine 10, glycine 11, serine 12, isoleucine 13, and asparagine 124. 1-deoxy-D-xylulose 5-phosphate is bound at residue lysine 125. An NADPH-binding site is contributed by glutamate 126. Aspartate 150 is a Mn(2+) binding site. Positions 151, 152, 186, and 209 each coordinate 1-deoxy-D-xylulose 5-phosphate. Position 152 (glutamate 152) interacts with Mn(2+). Glycine 215 serves as a coordination point for NADPH. The 1-deoxy-D-xylulose 5-phosphate site is built by serine 222, asparagine 227, lysine 228, and glutamate 231. Glutamate 231 is a Mn(2+) binding site.

It belongs to the DXR family. Mg(2+) serves as cofactor. It depends on Mn(2+) as a cofactor.

The enzyme catalyses 2-C-methyl-D-erythritol 4-phosphate + NADP(+) = 1-deoxy-D-xylulose 5-phosphate + NADPH + H(+). Its pathway is isoprenoid biosynthesis; isopentenyl diphosphate biosynthesis via DXP pathway; isopentenyl diphosphate from 1-deoxy-D-xylulose 5-phosphate: step 1/6. Its function is as follows. Catalyzes the NADPH-dependent rearrangement and reduction of 1-deoxy-D-xylulose-5-phosphate (DXP) to 2-C-methyl-D-erythritol 4-phosphate (MEP). This is 1-deoxy-D-xylulose 5-phosphate reductoisomerase from Psychromonas ingrahamii (strain DSM 17664 / CCUG 51855 / 37).